A 100-amino-acid chain; its full sequence is Ribosomal biogenesis factor (100 aa).

A Phosphoserine modification is found at S19. At K21 the chain carries N6-acetyllysine. Phosphoserine is present on S69.

As to quaternary structure, associates with the pre-60S ribosomal particles.

It localises to the nucleus. The protein localises to the nucleolus. Functionally, trans-acting factor in ribosome biogenesis required for efficient 40S and 60S subunit production. This chain is Ribosomal biogenesis factor (RBIS), found in Bos taurus (Bovine).